The primary structure comprises 352 residues: Holliday junction branch migration complex subunit RuvB (352 aa).

Positions M1 to Y182 are large ATPase domain (RuvB-L). ATP-binding positions include I21, R22, G63, K66, T67, T68, E129–F131, R172, Y182, and R219. T67 contacts Mg(2+). Residues E183–E253 form a small ATPAse domain (RuvB-S) region. Residues E256 to D352 form a head domain (RuvB-H) region. R292, R311, and R316 together coordinate DNA.

This sequence belongs to the RuvB family. In terms of assembly, homohexamer. Forms an RuvA(8)-RuvB(12)-Holliday junction (HJ) complex. HJ DNA is sandwiched between 2 RuvA tetramers; dsDNA enters through RuvA and exits via RuvB. An RuvB hexamer assembles on each DNA strand where it exits the tetramer. Each RuvB hexamer is contacted by two RuvA subunits (via domain III) on 2 adjacent RuvB subunits; this complex drives branch migration. In the full resolvosome a probable DNA-RuvA(4)-RuvB(12)-RuvC(2) complex forms which resolves the HJ.

Its subcellular location is the cytoplasm. The enzyme catalyses ATP + H2O = ADP + phosphate + H(+). Functionally, the RuvA-RuvB-RuvC complex processes Holliday junction (HJ) DNA during genetic recombination and DNA repair, while the RuvA-RuvB complex plays an important role in the rescue of blocked DNA replication forks via replication fork reversal (RFR). RuvA specifically binds to HJ cruciform DNA, conferring on it an open structure. The RuvB hexamer acts as an ATP-dependent pump, pulling dsDNA into and through the RuvAB complex. RuvB forms 2 homohexamers on either side of HJ DNA bound by 1 or 2 RuvA tetramers; 4 subunits per hexamer contact DNA at a time. Coordinated motions by a converter formed by DNA-disengaged RuvB subunits stimulates ATP hydrolysis and nucleotide exchange. Immobilization of the converter enables RuvB to convert the ATP-contained energy into a lever motion, pulling 2 nucleotides of DNA out of the RuvA tetramer per ATP hydrolyzed, thus driving DNA branch migration. The RuvB motors rotate together with the DNA substrate, which together with the progressing nucleotide cycle form the mechanistic basis for DNA recombination by continuous HJ branch migration. Branch migration allows RuvC to scan DNA until it finds its consensus sequence, where it cleaves and resolves cruciform DNA. This is Holliday junction branch migration complex subunit RuvB from Chlorobium chlorochromatii (strain CaD3).